A 396-amino-acid chain; its full sequence is Pectate lyase 5 (396 aa).

The N-terminal stretch at 1-25 (MGIKHCCYILYFTLALVTLLQPVRS) is a signal peptide. Residue Asn-36 is glycosylated (N-linked (GlcNAc...) asparagine). Cys-53 and Cys-70 form a disulfide bridge. Residues Asp-193, Asp-217, and Asp-221 each contribute to the Ca(2+) site. Arg-273 is a catalytic residue.

The protein belongs to the polysaccharide lyase 1 family. Amb a subfamily. In terms of assembly, monomer. Ca(2+) is required as a cofactor. The N-terminus is blocked. Pollen and flowers.

The catalysed reaction is Eliminative cleavage of (1-&gt;4)-alpha-D-galacturonan to give oligosaccharides with 4-deoxy-alpha-D-galact-4-enuronosyl groups at their non-reducing ends.. The protein operates within glycan metabolism; pectin degradation; 2-dehydro-3-deoxy-D-gluconate from pectin: step 2/5. Has pectate lyase activity. The polypeptide is Pectate lyase 5 (Ambrosia artemisiifolia (Common ragweed)).